The sequence spans 111 residues: uncharacterized protein (111 aa).

The protein belongs to the UPF0440 family.

This is an uncharacterized protein from Pyrococcus furiosus (strain ATCC 43587 / DSM 3638 / JCM 8422 / Vc1).